The sequence spans 666 residues: Frizzled-3 (666 aa).

An N-terminal signal peptide occupies residues 1–22; sequence MAMTWIVFSLWPLTVFMGHIGG. The 114-residue stretch at 23–136 folds into the FZ domain; the sequence is HSLFSCEPIT…CSRFPDCDEP (114 aa). Topologically, residues 23–205 are extracellular; it reads HSLFSCEPIT…REELSFARYF (183 aa). 5 disulfide bridges follow: Cys28–Cys89, Cys36–Cys82, Cys73–Cys110, Cys99–Cys133, and Cys103–Cys127. Asn42 carries N-linked (GlcNAc...) asparagine glycosylation. The helical transmembrane segment at 206–226 threads the bilayer; that stretch reads IGLISIICLSATLFTFLTFLI. Residues 227–237 lie on the Cytoplasmic side of the membrane; sequence DVTRFRYPERP. Residues 238-258 traverse the membrane as a helical segment; the sequence is IIFYAVCYMMVSLIFFIGFLL. The Extracellular portion of the chain corresponds to 259 to 288; it reads EDRVACNASIPAQYKASTVTQGSHNKACTM. A glycan (N-linked (GlcNAc...) asparagine) is linked at Asn265. A helical transmembrane segment spans residues 289 to 309; that stretch reads LFMILYFFTMAGSVWWVILTI. The Cytoplasmic portion of the chain corresponds to 310–328; sequence TWFLAAVPKWGSEAIEKKA. A helical membrane pass occupies residues 329-349; the sequence is LLFHASAWGIPGTLTIILLAM. Over 350 to 374 the chain is Extracellular; it reads NKIEGDNISGVCFVGLYDVDALRYF. Asn356 carries an N-linked (GlcNAc...) asparagine glycan. A helical membrane pass occupies residues 375–395; it reads VLAPLCLYVVVGVSLLLAGII. The Cytoplasmic portion of the chain corresponds to 396 to 420; the sequence is SLNRVRIEIPLEKENQDKLVKFMIR. Residues 421–441 traverse the membrane as a helical segment; the sequence is IGVFSILYLVPLLVVIGCYFY. Residues 442–477 lie on the Extracellular side of the membrane; the sequence is EQAYRGIWETTWIQERCREYHIPCPYQVTQMSRPDL. A helical membrane pass occupies residues 478 to 498; it reads ILFLMKYLMALIVGIPSVFWV. At 499–666 the chain is on the cytoplasmic side; sequence GSKKTCFEWA…RVIEEDGTSA (168 aa). The short motif at 502-507 is the Lys-Thr-X-X-X-Trp motif, mediates interaction with the PDZ domain of Dvl family members element; it reads KTCFEW. The tract at residues 538–666 is disordered; sequence RDPNTPIIRK…RVIEEDGTSA (129 aa). A compositionally biased stretch (polar residues) spans 550–565; the sequence is GTSTQGTSTHASSTQL. The span at 617-638 shows a compositional bias: basic and acidic residues; it reads LTDHSRHSSSHRLNEQSRHSSI. Over residues 639–656 the composition is skewed to polar residues; that stretch reads RDLSNNPMTHITHGTSMN.

The protein belongs to the G-protein coupled receptor Fz/Smo family. Interacts with VANGL2. Post-translationally, ubiquitinated by ZNRF3, leading to its degradation by the proteasome. In terms of tissue distribution, widely expressed. Relatively high expression in the CNS, including regions of the limbic system, in kidney, pancreas, skeletal muscle, uterus and testis.

Its subcellular location is the membrane. It is found in the cell membrane. The protein resides in the cell surface. It localises to the apical cell membrane. Receptor for Wnt proteins. Most of frizzled receptors are coupled to the beta-catenin canonical signaling pathway, which leads to the activation of disheveled proteins, inhibition of GSK-3 kinase, nuclear accumulation of beta-catenin and activation of Wnt target genes. A second signaling pathway involving PKC and calcium fluxes has been seen for some family members, but it is not yet clear if it represents a distinct pathway or if it can be integrated in the canonical pathway, as PKC seems to be required for Wnt-mediated inactivation of GSK-3 kinase. Both pathways seem to involve interactions with G-proteins. Activation by Wnt5A stimulates PKC activity via a G-protein-dependent mechanism. Involved in transduction and intercellular transmission of polarity information during tissue morphogenesis and/or in differentiated tissues. Plays a role in controlling early axon growth and guidance processes necessary for the formation of a subset of central and peripheral major fiber tracts. Required for the development of major fiber tracts in the central nervous system, including: the anterior commissure, the corpus callosum, the thalamocortical, corticothalamic and nigrostriatal tracts, the corticospinal tract, the fasciculus retroflexus, the mammillothalamic tract, the medial lemniscus, and ascending fiber tracts from the spinal cord to the brain. In the peripheral nervous system, controls axon growth in distinct populations of cranial and spinal motor neurons, including the facial branchimotor nerve, the hypoglossal nerve, the phrenic nerve, and motor nerves innervating dorsal limbs. Involved in the migration of cranial neural crest cells. May also be implicated in the transmission of sensory information from the trunk and limbs to the brain. Controls commissural sensory axons guidance after midline crossing along the anterior-posterior axis in the developing spinal cord in a Wnt-dependent signaling pathway. Together with FZD6, is involved in the neural tube closure and plays a role in the regulation of the establishment of planar cell polarity (PCP), particularly in the orientation of asymmetric bundles of stereocilia on the apical faces of a subset of auditory and vestibular sensory cells located in the inner ear. Promotes neurogenesis by maintaining sympathetic neuroblasts within the cell cycle in a beta-catenin-dependent manner. This is Frizzled-3 (FZD3) from Homo sapiens (Human).